Consider the following 255-residue polypeptide: Ditrans,polycis-undecaprenyl-diphosphate synthase ((2E,6E)-farnesyl-diphosphate specific) (255 aa).

Residue D21 is part of the active site. D21 contributes to the Mg(2+) binding site. Substrate contacts are provided by residues G22 to R25, W26, R34, H38, and S66 to E68. Catalysis depends on N69, which acts as the Proton acceptor. Residues W70, R72, R189, and R195–S197 each bind substrate. E208 lines the Mg(2+) pocket.

It belongs to the UPP synthase family. As to quaternary structure, homodimer. It depends on Mg(2+) as a cofactor.

It catalyses the reaction 8 isopentenyl diphosphate + (2E,6E)-farnesyl diphosphate = di-trans,octa-cis-undecaprenyl diphosphate + 8 diphosphate. Functionally, catalyzes the sequential condensation of isopentenyl diphosphate (IPP) with (2E,6E)-farnesyl diphosphate (E,E-FPP) to yield (2Z,6Z,10Z,14Z,18Z,22Z,26Z,30Z,34E,38E)-undecaprenyl diphosphate (di-trans,octa-cis-UPP). UPP is the precursor of glycosyl carrier lipid in the biosynthesis of bacterial cell wall polysaccharide components such as peptidoglycan and lipopolysaccharide. The sequence is that of Ditrans,polycis-undecaprenyl-diphosphate synthase ((2E,6E)-farnesyl-diphosphate specific) from Xylella fastidiosa (strain Temecula1 / ATCC 700964).